We begin with the raw amino-acid sequence, 141 residues long: Holo-[acyl-carrier-protein] synthase (141 aa).

The Mg(2+) site is built by D8 and E63.

The protein belongs to the P-Pant transferase superfamily. AcpS family. It depends on Mg(2+) as a cofactor.

The protein localises to the cytoplasm. The catalysed reaction is apo-[ACP] + CoA = holo-[ACP] + adenosine 3',5'-bisphosphate + H(+). Functionally, transfers the 4'-phosphopantetheine moiety from coenzyme A to a Ser of acyl-carrier-protein. The chain is Holo-[acyl-carrier-protein] synthase from Rhodospirillum centenum (strain ATCC 51521 / SW).